The following is a 241-amino-acid chain: Phosphoribosyl isomerase A (241 aa).

Asp11 serves as the catalytic Proton acceptor. The active-site Proton donor is Asp130.

This sequence belongs to the HisA/HisF family.

It localises to the cytoplasm. It carries out the reaction 1-(5-phospho-beta-D-ribosyl)-5-[(5-phospho-beta-D-ribosylamino)methylideneamino]imidazole-4-carboxamide = 5-[(5-phospho-1-deoxy-D-ribulos-1-ylimino)methylamino]-1-(5-phospho-beta-D-ribosyl)imidazole-4-carboxamide. The catalysed reaction is N-(5-phospho-beta-D-ribosyl)anthranilate = 1-(2-carboxyphenylamino)-1-deoxy-D-ribulose 5-phosphate. Its pathway is amino-acid biosynthesis; L-histidine biosynthesis; L-histidine from 5-phospho-alpha-D-ribose 1-diphosphate: step 4/9. It participates in amino-acid biosynthesis; L-tryptophan biosynthesis; L-tryptophan from chorismate: step 3/5. In terms of biological role, involved in both the histidine and tryptophan biosynthetic pathways. This is Phosphoribosyl isomerase A from Streptomyces griseus subsp. griseus (strain JCM 4626 / CBS 651.72 / NBRC 13350 / KCC S-0626 / ISP 5235).